A 427-amino-acid polypeptide reads, in one-letter code: Serine--tRNA ligase (427 aa).

233–235 is a binding site for L-serine; that stretch reads TAE. An ATP-binding site is contributed by 264–266; it reads RSE. An L-serine-binding site is contributed by Glu-287. 351 to 354 serves as a coordination point for ATP; sequence EISS. Ser-386 is an L-serine binding site.

Belongs to the class-II aminoacyl-tRNA synthetase family. Type-1 seryl-tRNA synthetase subfamily. Homodimer. The tRNA molecule binds across the dimer.

It is found in the cytoplasm. The catalysed reaction is tRNA(Ser) + L-serine + ATP = L-seryl-tRNA(Ser) + AMP + diphosphate + H(+). The enzyme catalyses tRNA(Sec) + L-serine + ATP = L-seryl-tRNA(Sec) + AMP + diphosphate + H(+). Its pathway is aminoacyl-tRNA biosynthesis; selenocysteinyl-tRNA(Sec) biosynthesis; L-seryl-tRNA(Sec) from L-serine and tRNA(Sec): step 1/1. In terms of biological role, catalyzes the attachment of serine to tRNA(Ser). Is also able to aminoacylate tRNA(Sec) with serine, to form the misacylated tRNA L-seryl-tRNA(Sec), which will be further converted into selenocysteinyl-tRNA(Sec). The sequence is that of Serine--tRNA ligase from Thiobacillus denitrificans (strain ATCC 25259 / T1).